Reading from the N-terminus, the 639-residue chain is CREB3 regulatory factor (639 aa).

A disordered region spans residues 302-422; it reads PLPQEGPGSL…SVEDLKEVTS (121 aa). A compositionally biased stretch (low complexity) spans 310–328; sequence SLAAGESSSLSASTSVSDS. The segment covering 339 to 351 has biased composition (polar residues); that stretch reads LFVSDNLGEQPTK. The segment covering 355–370 has biased composition (acidic residues); that stretch reads EEDEEDEEDVDDEDHD. A compositionally biased stretch (basic and acidic residues) spans 371–380; it reads EGFGSEHELS. The span at 381–401 shows a compositional bias: acidic residues; the sequence is ENEEEEEEEEDYEDDKDDDIS. The bZIP domain occupies 521–584; that stretch reads TARPRSRKEK…VNRVQNPRDE (64 aa). The tract at residues 523–532 is basic motif; it reads RPRSRKEKNK. The segment at 533–540 is leucine-zipper; that stretch reads LASRACRL.

This sequence belongs to the bZIP family. CREBRF subfamily. In terms of assembly, interacts (via leucine-zipper domain) with CREB3 (via leucine-zipper domain); the interaction promotes CREB3 degradation. Post-translationally, probably degraded by the proteasome.

It localises to the nucleus. Its function is as follows. Acts as a negative regulator of the endoplasmic reticulum stress response or unfolded protein response (UPR). Represses the transcriptional activity of CREB3 during the UPR. Recruits CREB3 into nuclear foci. The protein is CREB3 regulatory factor (CREBRF) of Homo sapiens (Human).